A 1040-amino-acid chain; its full sequence is Multidrug resistance protein MdtB (1040 aa).

12 helical membrane-spanning segments follow: residues 25–45 (LLMVAILLAGIIGYQALPVSA), 347–367 (LMMAIALVVMIIYLFLRNIPA), 369–389 (IIPGVAVPLSLIGTFAVMVFL), 396–416 (LTLMALTIATGFVVDDAIVVI), 440–460 (IGFTIISLTFSLIAVLIPLLF), 472–492 (FAITLAVAILISAVVSLTLTP), 537–557 (WLTLSVALSTLLLSVLLWVFI), 863–883 (LGSTVWLIVAAVVAMYIVLGI), 888–908 (FIHPITILSTLPTAGVGALLA), 911–931 (IAGSELDVIAIIGIILLIGIV), 968–988 (ILMTTLAALLGALPLMLSTGV), and 998–1018 (IGMVGGLIVSQVLTLFTTPVI).

This sequence belongs to the resistance-nodulation-cell division (RND) (TC 2.A.6) family. MdtB subfamily. As to quaternary structure, part of a tripartite efflux system composed of MdtA, MdtB and MdtC. MdtB forms a heteromultimer with MdtC.

It is found in the cell inner membrane. Functionally, the MdtABC tripartite complex confers resistance against novobiocin and deoxycholate. In Escherichia coli O127:H6 (strain E2348/69 / EPEC), this protein is Multidrug resistance protein MdtB.